The following is a 628-amino-acid chain: Probable potassium transport system protein Kup (628 aa).

The next 12 membrane-spanning stretches (helical) occupy residues 15-35, 49-69, 106-126, 141-161, 174-194, 210-230, 254-274, 295-315, 343-363, 369-389, 398-418, and 425-445; these read FAAE…SPLY, FLGG…ILSV, WYLL…GVLT, ISPE…LAVF, FFGP…VYGI, IMLM…CFLA, LFVA…ILLV, LLFL…TGVF, IYVG…VLGF, LASA…ILFI, WPAP…FAFA, and IHDG…VMVS.

The protein belongs to the HAK/KUP transporter (TC 2.A.72) family.

The protein localises to the cell inner membrane. The enzyme catalyses K(+)(in) + H(+)(in) = K(+)(out) + H(+)(out). Transport of potassium into the cell. Likely operates as a K(+):H(+) symporter. The chain is Probable potassium transport system protein Kup from Xanthobacter autotrophicus (strain ATCC BAA-1158 / Py2).